The following is a 376-amino-acid chain: N-acetyldiaminopimelate deacetylase (376 aa).

Residue Asp-69 is part of the active site. Glu-128 (proton acceptor) is an active-site residue.

Belongs to the peptidase M20A family. N-acetyldiaminopimelate deacetylase subfamily.

The enzyme catalyses N-acetyl-(2S,6S)-2,6-diaminopimelate + H2O = (2S,6S)-2,6-diaminopimelate + acetate. It participates in amino-acid biosynthesis; L-lysine biosynthesis via DAP pathway; LL-2,6-diaminopimelate from (S)-tetrahydrodipicolinate (acetylase route): step 3/3. Its function is as follows. Catalyzes the conversion of N-acetyl-diaminopimelate to diaminopimelate and acetate. This chain is N-acetyldiaminopimelate deacetylase, found in Streptococcus pneumoniae (strain JJA).